Consider the following 593-residue polypeptide: Kelch-like protein 2 (593 aa).

The interval Met-1 to His-29 is disordered. A compositionally biased stretch (basic and acidic residues) spans Lys-17–His-29. One can recognise a BTB domain in the interval Cys-56–Glu-123. Kelch repeat units follow at residues Leu-308–Gly-353, Leu-354–Gly-400, Leu-402–Gly-447, Leu-449–Asn-496, Leu-497–Gly-543, and Leu-545–Lys-591.

In terms of assembly, component of the BCR(KLHL2) E3 ubiquitin ligase complex, at least composed of CUL3 and KLHL2 and RBX1. Binds actin. Interacts with KLHL12. Interacts (via N-terminus) with FYN (via SH3 domain). In terms of tissue distribution, detected in brain neurons, oligodendrocytes and astrocytes (at protein level).

The protein localises to the cytoplasm. The protein resides in the cytoskeleton. Its subcellular location is the cell projection. It is found in the ruffle. It localises to the lamellipodium. The protein localises to the cytosol. Its pathway is protein modification; protein ubiquitination. Substrate-specific adapter of a BCR (BTB-CUL3-RBX1) E3 ubiquitin ligase complex that mediates the ubiquitination of target proteins, such as NPTXR, WNK1, WNK3 and WNK4, leading most often to their proteasomal degradation. The BCR(KLHL2) complex catalyzes ubiquitination and degradation of NPTXR. Responsible for degradative ubiquitination of the WNK kinases WNK1, WNK3 and WNK4. Plays a role in the reorganization of the actin cytoskeleton. Promotes growth of cell projections in oligodendrocyte precursors. The polypeptide is Kelch-like protein 2 (Rattus norvegicus (Rat)).